The chain runs to 87 residues: Small ribosomal subunit protein bS20 (87 aa).

It belongs to the bacterial ribosomal protein bS20 family.

Binds directly to 16S ribosomal RNA. The sequence is that of Small ribosomal subunit protein bS20 from Beijerinckia indica subsp. indica (strain ATCC 9039 / DSM 1715 / NCIMB 8712).